The following is a 156-amino-acid chain: Transcription elongation factor GreA (156 aa).

Positions 46–66 form a coiled coil; that stretch reads AEYHSAREKQSFIEGRIKELE.

The protein belongs to the GreA/GreB family.

In terms of biological role, necessary for efficient RNA polymerase transcription elongation past template-encoded arresting sites. The arresting sites in DNA have the property of trapping a certain fraction of elongating RNA polymerases that pass through, resulting in locked ternary complexes. Cleavage of the nascent transcript by cleavage factors such as GreA or GreB allows the resumption of elongation from the new 3'terminus. GreA releases sequences of 2 to 3 nucleotides. The protein is Transcription elongation factor GreA of Ruegeria pomeroyi (strain ATCC 700808 / DSM 15171 / DSS-3) (Silicibacter pomeroyi).